Consider the following 468-residue polypeptide: uncharacterized protein (468 aa).

Residues 447–468 form a disordered region; it reads AVHVSNGDKPKVALPDTQLGSH.

Belongs to the mycobacterial PPE family.

This is an uncharacterized protein from Mycobacterium tuberculosis (strain CDC 1551 / Oshkosh).